A 167-amino-acid chain; its full sequence is Endoribonuclease YbeY (167 aa).

His-131, His-135, and His-141 together coordinate Zn(2+).

The protein belongs to the endoribonuclease YbeY family. It depends on Zn(2+) as a cofactor.

It localises to the cytoplasm. Functionally, single strand-specific metallo-endoribonuclease involved in late-stage 70S ribosome quality control and in maturation of the 3' terminus of the 16S rRNA. The chain is Endoribonuclease YbeY from Rickettsia felis (strain ATCC VR-1525 / URRWXCal2) (Rickettsia azadi).